The primary structure comprises 117 residues: Ribosome-binding factor A (117 aa).

This sequence belongs to the RbfA family. As to quaternary structure, monomer. Binds 30S ribosomal subunits, but not 50S ribosomal subunits or 70S ribosomes.

The protein localises to the cytoplasm. Functionally, one of several proteins that assist in the late maturation steps of the functional core of the 30S ribosomal subunit. Associates with free 30S ribosomal subunits (but not with 30S subunits that are part of 70S ribosomes or polysomes). Required for efficient processing of 16S rRNA. May interact with the 5'-terminal helix region of 16S rRNA. The polypeptide is Ribosome-binding factor A (Petrotoga mobilis (strain DSM 10674 / SJ95)).